The following is a 53-amino-acid chain: UPF0391 membrane protein azo1750 (53 aa).

2 consecutive transmembrane segments (helical) span residues 6 to 26 (VIFL…IAAG) and 30 to 50 (IAKI…VLGM).

Belongs to the UPF0391 family.

It localises to the cell membrane. The protein is UPF0391 membrane protein azo1750 of Azoarcus sp. (strain BH72).